Consider the following 95-residue polypeptide: Co-chaperonin GroES (95 aa).

This sequence belongs to the GroES chaperonin family. Heptamer of 7 subunits arranged in a ring. Interacts with the chaperonin GroEL.

The protein localises to the cytoplasm. Functionally, together with the chaperonin GroEL, plays an essential role in assisting protein folding. The GroEL-GroES system forms a nano-cage that allows encapsulation of the non-native substrate proteins and provides a physical environment optimized to promote and accelerate protein folding. GroES binds to the apical surface of the GroEL ring, thereby capping the opening of the GroEL channel. The chain is Co-chaperonin GroES from Ruthia magnifica subsp. Calyptogena magnifica.